The chain runs to 208 residues: Mediator of RNA polymerase II transcription subunit 18 (208 aa).

It belongs to the Mediator complex subunit 18 family. As to quaternary structure, component of the Mediator complex.

The protein resides in the nucleus. In terms of biological role, component of the Mediator complex, a coactivator involved in the regulated transcription of nearly all RNA polymerase II-dependent genes. Mediator functions as a bridge to convey information from gene-specific regulatory proteins to the basal RNA polymerase II transcription machinery. Mediator is recruited to promoters by direct interactions with regulatory proteins and serves as a scaffold for the assembly of a functional preinitiation complex with RNA polymerase II and the general transcription factors. The sequence is that of Mediator of RNA polymerase II transcription subunit 18 (med18) from Xenopus tropicalis (Western clawed frog).